A 711-amino-acid polypeptide reads, in one-letter code: T-box transcription factor TBX2 (711 aa).

Residues 109–287 (LEAKELWDQF…NNPFAKGFRD (179 aa)) constitute a DNA-binding region (T-box). The segment at 313–449 (PERDGAESDA…GEGKEPSLAP (137 aa)) is disordered. The span at 326–340 (DPPPAREPPPSPSAA) shows a compositional bias: pro residues. Phosphoserine is present on residues serine 336, serine 342, and serine 360. 3 stretches are compositionally biased toward basic and acidic residues: residues 363-372 (EPERTGEERS), 390-409 (TEPE…KEPT), and 421-444 (SLEK…EGKE). A repression domain 1 (RD1) region spans residues 518–602 (GSGSSGGAGP…ATSAAAAAAA (85 aa)). 4 positions are modified to phosphoserine: serine 623, serine 652, serine 656, and serine 675. The tract at residues 640 to 687 (TGLAAEGSKGGNSREPSPLPELALRKVGGPSRGALSPSGSAKEAASEL) is disordered.

As to quaternary structure, binds DNA as a monomer. Interacts with CHD4, HDAC1 and HDAC2, perhaps as components of a NuRD-like complex. Interacts with CBX3, HMGB2 and PBX1. Interacts with PML. In terms of processing, phosphorylated. May be phosphorylated by p38 MAPK in response to UV irradiation stress. In terms of tissue distribution, in adults, highest levels in lung. Also found in heart, kidney, and ovary.

It is found in the nucleus. Functionally, transcription factor which acts as a transcriptional repressor. May also function as a transcriptional activator. Binds to the palindromic T site 5'-TTCACACCTAGGTGTGAA-3' DNA sequence, or a half-site, which are present in the regulatory region of several genes. Required for cardiac atrioventricular canal formation. May cooperate with NKX2.5 to negatively modulate expression of NPPA/ANF in the atrioventricular canal. May play a role as a positive regulator of TGFB2 expression, perhaps acting in concert with GATA4 in the developing outflow tract myocardium. Plays a role in limb pattern formation. Acts as a transcriptional repressor of ADAM10 gene expression, perhaps in concert with histone deacetylase HDAC1 as cofactor. Involved in branching morphogenesis in both developing lungs and adult mammary glands, via negative modulation of target genes; acting redundantly with TBX3. Required, together with TBX3, to maintain cell proliferation in the embryonic lung mesenchyme; perhaps acting downstream of SHH, BMP and TGFbeta signaling. Involved in modulating early inner ear development, acting independently of, and also redundantly with TBX3, in different subregions of the developing ear. Acts as a negative regulator of PML function in cellular senescence. Acts as a negative regulator of expression of CDKN1A/p21, IL33 and CCN4; repression of CDKN1A is enhanced in response to UV-induced stress, perhaps as a result of phosphorylation by p38 MAPK. Negatively modulates expression of CDKN2A/p19ARF and CDH1/E-cadherin. Plays a role in induction of the epithelial-mesenchymal transition (EMT). Plays a role in melanocyte proliferation, perhaps via regulation of cyclin CCND1. Involved in melanogenesis, acting via negative modulation of expression of DHICA oxidase/TYRP1 and P protein/OCA2. Involved in regulating retinal pigment epithelium (RPE) cell proliferation, perhaps via negatively modulating transcription of the transcription factor CEBPD. In Mus musculus (Mouse), this protein is T-box transcription factor TBX2 (Tbx2).